A 219-amino-acid chain; its full sequence is MNQLEMKKLAAQAALQYVKADTIVGVGSGSTVNCFIEALGTIKDKIQGAVAASKESEELLRKQGIEVFNANDVSSLDIYVDGADEINPQKMMIKGGGAALTREKIVAALAKKFICIVDSSKQVDVLGSTFPLPVEVIPMARSQVGRKLVALGGSPEYREDVVTDNGNVILDVHNFSILNPVEMEKELNNVSGVVTNGIFALRGADVVIVGTPEGAKIID.

Residues 28-31 (SGST), 81-84 (DGAD), and 94-97 (KGGG) contribute to the substrate site. Glu-103 (proton acceptor) is an active-site residue. Residue Lys-121 coordinates substrate.

Belongs to the ribose 5-phosphate isomerase family. In terms of assembly, homodimer.

The catalysed reaction is aldehydo-D-ribose 5-phosphate = D-ribulose 5-phosphate. Its pathway is carbohydrate degradation; pentose phosphate pathway; D-ribose 5-phosphate from D-ribulose 5-phosphate (non-oxidative stage): step 1/1. Its function is as follows. Catalyzes the reversible conversion of ribose-5-phosphate to ribulose 5-phosphate. The sequence is that of Ribose-5-phosphate isomerase A from Haemophilus influenzae (strain PittGG).